The sequence spans 196 residues: Corrinoid adenosyltransferase CobA (196 aa).

36–42 lines the ATP pocket; sequence GNGKGKT.

It belongs to the Cob(I)alamin adenosyltransferase family. Homodimer.

The protein resides in the cytoplasm. It carries out the reaction 2 cob(II)yrinate a,c diamide + reduced [electron-transfer flavoprotein] + 2 ATP = 2 adenosylcob(III)yrinate a,c-diamide + 2 triphosphate + oxidized [electron-transfer flavoprotein] + 3 H(+). The catalysed reaction is 2 cob(II)alamin + reduced [electron-transfer flavoprotein] + 2 ATP = 2 adenosylcob(III)alamin + 2 triphosphate + oxidized [electron-transfer flavoprotein] + 3 H(+). The protein operates within cofactor biosynthesis; adenosylcobalamin biosynthesis; adenosylcobalamin from cob(II)yrinate a,c-diamide: step 2/7. Functionally, required for both de novo synthesis of the corrin ring for the assimilation of exogenous corrinoids. Participates in the adenosylation of a variety of incomplete and complete corrinoids. The sequence is that of Corrinoid adenosyltransferase CobA (btuR) from Salmonella typhimurium (strain LT2 / SGSC1412 / ATCC 700720).